Reading from the N-terminus, the 378-residue chain is MASQSQVLVEEKSSVRILTLNRPKQLNALCFNMISRLLQLFRAYEEDPSVKLVILKGQGRAFCAGGDVPPVVQNMVQGKWRLGADFFRDQYTLNYVMATYSKPQVSILNGIVMGAGAGVSIHGRFRIATENTVFAMPETSLGLFPDVGASYFLSRLPGFFGEYVGLTGARLDGAELLACGLATHFVPSTRLTALETDLCKVGSSDPSFVSTILDAYTQHPHLKQKSAYHRLDVIDRCFSKRTMEEIISALERETTQELDDWSLTTIRALKKSSPSSLKISLRSIREGRLQGVGHCLTREYRMVCHVMKGDLSKDLVEGCRAILIDKDRNPKWEPRRLEDMKDSMVDQFFERVEEEERWEDLKLSPRNNLHALRIAAKL.

Positions 138 and 146 each coordinate substrate.

It belongs to the enoyl-CoA hydratase/isomerase family.

It localises to the peroxisome. It catalyses the reaction 3-hydroxy-2-methylpropanoyl-CoA + H2O = 3-hydroxy-2-methylpropanoate + CoA + H(+). Its pathway is amino-acid degradation; L-valine degradation. Functionally, involved in valine catabolism. The polypeptide is Probable 3-hydroxyisobutyryl-CoA hydrolase 3 (Arabidopsis thaliana (Mouse-ear cress)).